We begin with the raw amino-acid sequence, 97 residues long: Small ribosomal subunit protein eS25 (97 aa).

Residues 1 to 24 are disordered; it reads MAPAASGAKKQKKKWSKGKVKDKA. A compositionally biased stretch (basic residues) spans 9-18; the sequence is KKQKKKWSKG.

This sequence belongs to the eukaryotic ribosomal protein eS25 family. In terms of assembly, component of the small ribosomal subunit (SSU). Mature N.crassa ribosomes consist of a small (40S) and a large (60S) subunit. The 40S small subunit contains 1 molecule of ribosomal RNA (18S rRNA) and at least 32 different proteins. The large 60S subunit contains 3 rRNA molecules (26S, 5.8S and 5S rRNA) and at least 42 different proteins.

Its subcellular location is the cytoplasm. Component of the ribosome, a large ribonucleoprotein complex responsible for the synthesis of proteins in the cell. The small ribosomal subunit (SSU) binds messenger RNAs (mRNAs) and translates the encoded message by selecting cognate aminoacyl-transfer RNA (tRNA) molecules. The large subunit (LSU) contains the ribosomal catalytic site termed the peptidyl transferase center (PTC), which catalyzes the formation of peptide bonds, thereby polymerizing the amino acids delivered by tRNAs into a polypeptide chain. The nascent polypeptides leave the ribosome through a tunnel in the LSU and interact with protein factors that function in enzymatic processing, targeting, and the membrane insertion of nascent chains at the exit of the ribosomal tunnel. This chain is Small ribosomal subunit protein eS25 (rps-25), found in Neurospora crassa (strain ATCC 24698 / 74-OR23-1A / CBS 708.71 / DSM 1257 / FGSC 987).